A 286-amino-acid polypeptide reads, in one-letter code: MSLRDKLDAYLRLARMDRPIGTFLLLWPCLMALVLAAGGMPDLKVLIIFVIGVVVMRACGCIINDYADRKLDSHVERTKSRPLASGEVTVKEALILFVVMGLLAFGLVLMLNPLVVQLSFVGIILTIIYPFTKRFTNMPQMFLGVVWSWSIPMAYAAQLGTVPVEAWWLFAANWCWTVAYDTMYAMVDRDDDLKVGIKSTAILFGRFDRQIIGLFQLAALGCFIMAGLSADRGLVFALGILTFIGFGLYQQKLIFDRERAPCLQAFLNNNWAGMVLFVTLGADYLI.

The next 8 membrane-spanning stretches (helical) occupy residues 20–40, 43–63, 95–115, 116–136, 142–162, 167–187, 210–230, and 235–255; these read IGTF…AGGM, LKVL…GCII, ILFV…NPLV, VQLS…KRFT, FLGV…LGTV, WWLF…YAMV, QIIG…GLSA, and VFAL…KLIF.

It belongs to the UbiA prenyltransferase family. It depends on Mg(2+) as a cofactor.

It localises to the cell inner membrane. The catalysed reaction is all-trans-octaprenyl diphosphate + 4-hydroxybenzoate = 4-hydroxy-3-(all-trans-octaprenyl)benzoate + diphosphate. It participates in cofactor biosynthesis; ubiquinone biosynthesis. Catalyzes the prenylation of para-hydroxybenzoate (PHB) with an all-trans polyprenyl group. Mediates the second step in the final reaction sequence of ubiquinone-8 (UQ-8) biosynthesis, which is the condensation of the polyisoprenoid side chain with PHB, generating the first membrane-bound Q intermediate 3-octaprenyl-4-hydroxybenzoate. The polypeptide is 4-hydroxybenzoate octaprenyltransferase (Shewanella loihica (strain ATCC BAA-1088 / PV-4)).